The chain runs to 155 residues: Ribosomal RNA large subunit methyltransferase H (155 aa).

S-adenosyl-L-methionine-binding positions include leucine 72, glycine 104, and 123-128; that span reads LSRMTF.

The protein belongs to the RNA methyltransferase RlmH family. In terms of assembly, homodimer.

The protein resides in the cytoplasm. The enzyme catalyses pseudouridine(1915) in 23S rRNA + S-adenosyl-L-methionine = N(3)-methylpseudouridine(1915) in 23S rRNA + S-adenosyl-L-homocysteine + H(+). Specifically methylates the pseudouridine at position 1915 (m3Psi1915) in 23S rRNA. This chain is Ribosomal RNA large subunit methyltransferase H, found in Kosmotoga olearia (strain ATCC BAA-1733 / DSM 21960 / TBF 19.5.1).